An 84-amino-acid chain; its full sequence is Mu-conotoxin-like Cal 12.2d (84 aa).

The N-terminal stretch at 1-19 (MKLTCVLVVLLLVLPFGDL) is a signal peptide. A propeptide spanning residues 20–42 (ITTSNTEDNKRGATPWQNSLKAR) is cleaved from the precursor. W72 is subject to 6'-bromotryptophan. Residue P77 is modified to 4-hydroxyproline. W81 carries the 6'-bromotryptophan modification.

Belongs to the conotoxin O1 superfamily. In terms of processing, contains 4 disulfide bonds. In terms of tissue distribution, expressed by the venom duct.

The protein resides in the secreted. Functionally, mu-conotoxins block voltage-gated sodium channels. This toxin reversibly blocks voltage-gated sodium channel in cephalopods, with no alteration in the voltage dependence of sodium conductance or on the kinetics of inactivation. This is Mu-conotoxin-like Cal 12.2d from Californiconus californicus (California cone).